The sequence spans 204 residues: Apoptosis regulator R11 (204 aa).

The BH1 motif lies at 101-120 (ELFRDGTNWGRIVAFFSFGR). The BH2 signature appears at 152–167 (PWMQENGGWEAFVGLY). Residues 181 to 198 (RFGRLLTIVMLTGVFALV) form a helical membrane-spanning segment.

Belongs to the Bcl-2 family.

Its subcellular location is the membrane. In terms of biological role, confers strong protection against cell death. This chain is Apoptosis regulator R11, found in Xenopus laevis (African clawed frog).